A 30-amino-acid polypeptide reads, in one-letter code: M-poneritoxin-Ng3a (30 aa).

Expressed by the venom gland.

The protein resides in the secreted. In terms of biological role, shows a broad spectrum of activity against both Gram-positive and Gram-negative bacteria. Also has antimicrobial activity against S.cerevisiae. Has insecticidal and non-hemolytic activity. The polypeptide is M-poneritoxin-Ng3a (Neoponera goeldii (Ponerine ant)).